The primary structure comprises 389 residues: Arginine biosynthesis bifunctional protein ArgJ (389 aa).

The substrate site is built by Thr150, Lys173, Thr184, Glu263, Asn384, and Thr389. Catalysis depends on Thr184, which acts as the Nucleophile.

This sequence belongs to the ArgJ family. As to quaternary structure, heterotetramer of two alpha and two beta chains.

It is found in the cytoplasm. It catalyses the reaction N(2)-acetyl-L-ornithine + L-glutamate = N-acetyl-L-glutamate + L-ornithine. It carries out the reaction L-glutamate + acetyl-CoA = N-acetyl-L-glutamate + CoA + H(+). Its pathway is amino-acid biosynthesis; L-arginine biosynthesis; L-ornithine and N-acetyl-L-glutamate from L-glutamate and N(2)-acetyl-L-ornithine (cyclic): step 1/1. It participates in amino-acid biosynthesis; L-arginine biosynthesis; N(2)-acetyl-L-ornithine from L-glutamate: step 1/4. Functionally, catalyzes two activities which are involved in the cyclic version of arginine biosynthesis: the synthesis of N-acetylglutamate from glutamate and acetyl-CoA as the acetyl donor, and of ornithine by transacetylation between N(2)-acetylornithine and glutamate. The sequence is that of Arginine biosynthesis bifunctional protein ArgJ from Deinococcus radiodurans (strain ATCC 13939 / DSM 20539 / JCM 16871 / CCUG 27074 / LMG 4051 / NBRC 15346 / NCIMB 9279 / VKM B-1422 / R1).